The sequence spans 274 residues: Large ribosomal subunit protein uL2cz/uL2cy (274 aa).

Residues 224 to 274 (NPVDHPHGGGEGRAPIGRKKPATPWGYPALGRRSRKRNKYSDNLILRRRSK) form a disordered region.

The protein belongs to the universal ribosomal protein uL2 family. Part of the 50S ribosomal subunit.

It is found in the plastid. It localises to the chloroplast. The polypeptide is Large ribosomal subunit protein uL2cz/uL2cy (rpl2-A) (Morus indica (Mulberry)).